We begin with the raw amino-acid sequence, 765 residues long: Putative chloride channel-like protein CLC-g (765 aa).

12 consecutive transmembrane segments (helical) span residues 67–87 (VFMK…IGFA), 116–136 (FVVF…ITAF), 167–187 (LIIK…IGKA), 190–210 (MVHT…KRYR), 232–252 (GAAA…LFAL), 262–282 (ALLW…RALI), 315–335 (VLPV…YNFL), 355–375 (ILLA…LPFL), 438–458 (FSVL…YGIV), 462–482 (GLFV…GMLL), 494–514 (AVLG…STCV), and 515–535 (ILLE…VLLI). Residues 568–640 (MRQLLVGDVV…LLKKRVFMPS (73 aa)) enclose the CBS 1 domain. Residue Ser-646 is modified to Phosphoserine. Residues 687 to 748 (FSNASPYTVV…PEHILGLHPS (62 aa)) form the CBS 2 domain. The helical transmembrane segment at 715 to 735 (HLLVIPKTSNRPPVVGILTRH) threads the bilayer.

This sequence belongs to the chloride channel (TC 2.A.49) family. In terms of assembly, homodimer. Interacts with PP2A5.

It localises to the membrane. Its function is as follows. Putative voltage-gated chloride channel. This is Putative chloride channel-like protein CLC-g (CLC-G) from Arabidopsis thaliana (Mouse-ear cress).